Consider the following 780-residue polypeptide: E3 UFM1-protein ligase 1 homolog (780 aa).

Residues serine 403–threonine 413 are compositionally biased toward polar residues. Disordered regions lie at residues serine 403–isoleucine 458 and serine 734–leucine 760. 2 stretches are compositionally biased toward basic and acidic residues: residues lysine 443–isoleucine 458 and aspartate 736–aspartate 750.

Belongs to the UFL1 family.

E3 UFM1-protein ligase that mediates ufmylation of target proteins. This chain is E3 UFM1-protein ligase 1 homolog, found in Trichoplax adhaerens (Trichoplax reptans).